We begin with the raw amino-acid sequence, 677 residues long: Serine/threonine-protein kinase YPK2/YKR2 (677 aa).

The span at 1–12 (MHSWRISKFKLG) shows a compositional bias: basic residues. The tract at residues 1-115 (MHSWRISKFK…ETQGPSSESG (115 aa)) is disordered. Positions 41–56 (KHHDGSPKNHNHEHEH) are enriched in basic and acidic residues. Composition is skewed to polar residues over residues 61-93 (INTN…NDNS) and 101-115 (SQSS…SESG). Thr-63 and Thr-66 each carry phosphothreonine. Ser-72 bears the Phosphoserine mark. Positions 344 to 599 (FDLLKVIGKG…TDEIRNHPFF (256 aa)) constitute a Protein kinase domain. ATP is bound by residues 350–358 (IGKGSFGKV) and Lys-373. Asp-467 acts as the Proton acceptor in catalysis. A Phosphothreonine modification is found at Thr-499. Position 501 is a phosphothreonine; by PKH2 (Thr-501). Positions 600–670 (KDISWKKLLL…IGDEQLGDSP (71 aa)) constitute an AGC-kinase C-terminal domain. Ser-641 is modified (phosphoserine; by TOR2). Ser-650 is subject to Phosphoserine. The residue at position 659 (Thr-659) is a Phosphothreonine; by TOR2. At Ser-669 the chain carries Phosphoserine.

The protein belongs to the protein kinase superfamily. AGC Ser/Thr protein kinase family. RAC subfamily. In terms of processing, autophosphorylated. Phosphorylated by PKH2 and TOR2.

The protein resides in the cytoplasm. The catalysed reaction is L-seryl-[protein] + ATP = O-phospho-L-seryl-[protein] + ADP + H(+). It catalyses the reaction L-threonyl-[protein] + ATP = O-phospho-L-threonyl-[protein] + ADP + H(+). Activated by phytosphingosine (PHS), a sphingoid long chain base. Activated by PKH2 phosphorylation. Kinase activity is regulated by TOR2 via direct phosphorylation of Ser-641 and Thr-659. Its function is as follows. Plays an essential role in the proliferation of yeast cells. Involved in a signaling pathway, required for optimal cell wall integrity, that acts in parallel with the PKC1-SLT2-dependent pathway. A substrate of TOR complex 2 (TORC2) and required for TORC2 to regulate spatial aspects of cell growth. Phosphorylation of residue Thr-501 is indispensable for function. May act as a downstream kinase in the sphingolipid-mediated signaling pathway. This Saccharomyces cerevisiae (strain ATCC 204508 / S288c) (Baker's yeast) protein is Serine/threonine-protein kinase YPK2/YKR2 (YPK2).